Consider the following 346-residue polypeptide: Integrin beta-1-binding protein 2 (346 aa).

Zn(2+)-binding residues include Cys-5, Cys-10, Cys-24, and His-27. One can recognise a CHORD 1 domain in the interval 5-64; that stretch reads CHNKGCGQHFDPQTNLPDSCCHHPGVPVFHDALKGWSCCRKRTVDFSEFLNIKGCTVGPH. Residues 28–31 carry the SH3-binding motif; sequence PGVP. 4 residues coordinate Zn(2+): Cys-42, Cys-43, Cys-59, and His-64. The SH3-binding signature appears at 70 to 78; that stretch reads PEAPQPEGP. The tract at residues 70-113 is disordered; the sequence is PEAPQPEGPATSSSLLEQKPPNTIPKSAETLRRERPKSDLPPKL. The span at 79–94 shows a compositional bias: polar residues; that stretch reads ATSSSLLEQKPPNTIP. Residues 98 to 109 are compositionally biased toward basic and acidic residues; sequence ETLRRERPKSDL. 2 residues coordinate Zn(2+): Cys-150 and Cys-155. In terms of domain architecture, CHORD 2 spans 150-209; that stretch reads CQNPGCDAVYQGSESDATPCTYHPGAPRFHEGMKSWSCCGIQTLDFGVFLAQPGCRVGRH. The SH2-binding motif lies at 159-162; the sequence is YQGS. Zn(2+) is bound by residues Cys-169 and His-172. An SH3-binding motif is present at residues 173-176; sequence PGAP. 4 residues coordinate Zn(2+): Cys-187, Cys-188, Cys-204, and His-209. Residues 216 to 305 form the CS domain; the sequence is LASCRHDWHQ…ADPGFWAQLE (90 aa). The SH2-binding signature appears at 235 to 238; it reads YGQI. The interval 311-346 is disordered; that stretch reads AEKSKSGVGLEMDEEESEDSDDDLSWTEEEEEAMGE. Residues 321–346 are compositionally biased toward acidic residues; sequence EMDEEESEDSDDDLSWTEEEEEAMGE.

In terms of assembly, interacts with beta-1 integrin subunit. This interaction is regulated by divalent cations, and it occurs only in absence of calcium.

In terms of biological role, may play a role during maturation and/or organization of muscles cells. This chain is Integrin beta-1-binding protein 2 (ITGB1BP2), found in Sus scrofa (Pig).